An 891-amino-acid polypeptide reads, in one-letter code: Alanine--tRNA ligase (891 aa).

Zn(2+)-binding residues include His-564, His-568, Cys-677, and His-681.

This sequence belongs to the class-II aminoacyl-tRNA synthetase family. Zn(2+) serves as cofactor.

It localises to the cytoplasm. It catalyses the reaction tRNA(Ala) + L-alanine + ATP = L-alanyl-tRNA(Ala) + AMP + diphosphate. Functionally, catalyzes the attachment of alanine to tRNA(Ala) in a two-step reaction: alanine is first activated by ATP to form Ala-AMP and then transferred to the acceptor end of tRNA(Ala). Also edits incorrectly charged Ser-tRNA(Ala) and Gly-tRNA(Ala) via its editing domain. The protein is Alanine--tRNA ligase of Rhodopseudomonas palustris (strain HaA2).